Here is a 229-residue protein sequence, read N- to C-terminus: Cytochrome c oxidase subunit 2 (229 aa).

Residues 1–26 (MSTWANLGLQDSASPLMEQLIFFHDH) lie on the Mitochondrial intermembrane side of the membrane. The helical transmembrane segment at 27–48 (ALLILVMITVLVGYLMVMLFFN) threads the bilayer. Topologically, residues 49–62 (SYVNRFLLHGQLIE) are mitochondrial matrix. The chain crosses the membrane as a helical span at residues 63–82 (MIWTILPAIILLFIAMPSLR). Over 83–229 (LLYLLDEINE…IKWISDKVNS (147 aa)) the chain is Mitochondrial intermembrane. The Cu cation site is built by H161, C196, E198, C200, H204, and M207. E198 provides a ligand contact to Mg(2+).

This sequence belongs to the cytochrome c oxidase subunit 2 family. Component of the cytochrome c oxidase (complex IV, CIV), a multisubunit enzyme composed of a catalytic core of 3 subunits and several supernumerary subunits. The complex exists as a monomer or a dimer and forms supercomplexes (SCs) in the inner mitochondrial membrane with ubiquinol-cytochrome c oxidoreductase (cytochrome b-c1 complex, complex III, CIII). The cofactor is Cu cation.

It localises to the mitochondrion inner membrane. The catalysed reaction is 4 Fe(II)-[cytochrome c] + O2 + 8 H(+)(in) = 4 Fe(III)-[cytochrome c] + 2 H2O + 4 H(+)(out). Its function is as follows. Component of the cytochrome c oxidase, the last enzyme in the mitochondrial electron transport chain which drives oxidative phosphorylation. The respiratory chain contains 3 multisubunit complexes succinate dehydrogenase (complex II, CII), ubiquinol-cytochrome c oxidoreductase (cytochrome b-c1 complex, complex III, CIII) and cytochrome c oxidase (complex IV, CIV), that cooperate to transfer electrons derived from NADH and succinate to molecular oxygen, creating an electrochemical gradient over the inner membrane that drives transmembrane transport and the ATP synthase. Cytochrome c oxidase is the component of the respiratory chain that catalyzes the reduction of oxygen to water. Electrons originating from reduced cytochrome c in the intermembrane space (IMS) are transferred via the dinuclear copper A center (CU(A)) of subunit 2 and heme A of subunit 1 to the active site in subunit 1, a binuclear center (BNC) formed by heme A3 and copper B (CU(B)). The BNC reduces molecular oxygen to 2 water molecules using 4 electrons from cytochrome c in the IMS and 4 protons from the mitochondrial matrix. The chain is Cytochrome c oxidase subunit 2 (mt:CoII) from Drosophila subobscura (Fruit fly).